We begin with the raw amino-acid sequence, 169 residues long: Steroid receptor-associated and regulated protein (169 aa).

As to quaternary structure, interacts with 14-3-3 proteins. Expressed in breast tumors with a higher expression level in estrogen receptor-positive cancers.

Functionally, may regulate the transcriptional function of androgen and estrogen receptors. The polypeptide is Steroid receptor-associated and regulated protein (Homo sapiens (Human)).